The following is an 869-amino-acid chain: Retrovirus-related Pol polyprotein from type-1 retrotransposable element R2 (869 aa).

The region spanning 199-475 (IFVFYGRVPS…DLWKYLGVVY (277 aa)) is the Reverse transcriptase domain. The nucleic acid-binding endonuclease stretch occupies residues 601–869 (LYASISHSCK…FNNVTTVVHW (269 aa)).

It catalyses the reaction DNA(n) + a 2'-deoxyribonucleoside 5'-triphosphate = DNA(n+1) + diphosphate. This is Retrovirus-related Pol polyprotein from type-1 retrotransposable element R2 from Bradysia coprophila (Dark-winged fungus gnat).